The sequence spans 328 residues: tRNA uridine(34) hydroxylase (328 aa).

Positions 130 to 224 constitute a Rhodanese domain; it reads LDEDTIVLDT…YGKDPEVQGE (95 aa). Cysteine 184 serves as the catalytic Cysteine persulfide intermediate.

This sequence belongs to the TrhO family.

It catalyses the reaction uridine(34) in tRNA + AH2 + O2 = 5-hydroxyuridine(34) in tRNA + A + H2O. Functionally, catalyzes oxygen-dependent 5-hydroxyuridine (ho5U) modification at position 34 in tRNAs. The chain is tRNA uridine(34) hydroxylase from Streptococcus uberis (strain ATCC BAA-854 / 0140J).